The chain runs to 258 residues: Regulatory protein RecX (258 aa).

Belongs to the RecX family.

It localises to the cytoplasm. Its function is as follows. Modulates RecA activity. The protein is Regulatory protein RecX of Streptococcus pneumoniae (strain JJA).